A 227-amino-acid polypeptide reads, in one-letter code: uncharacterized protein (227 aa).

The signal sequence occupies residues 1-23 (MKKLTVTFLTFISIFFAATAAFA).

This is an uncharacterized protein from Coxiella burnetii (strain RSA 493 / Nine Mile phase I).